Reading from the N-terminus, the 159-residue chain is Small ribosomal subunit protein uS4 (159 aa).

Residues 106–158 (RRLQTLVFRMGLAKSIHHARQLVVHGHVLVAGRRVTSPGFLVPRELEDKITIE) enclose the S4 RNA-binding domain.

Belongs to the universal ribosomal protein uS4 family. In terms of assembly, part of the 30S ribosomal subunit. Contacts protein S5. The interaction surface between S4 and S5 is involved in control of translational fidelity.

One of the primary rRNA binding proteins, it binds directly to 16S rRNA where it nucleates assembly of the body of the 30S subunit. In terms of biological role, with S5 and S12 plays an important role in translational accuracy. The polypeptide is Small ribosomal subunit protein uS4 (Pyrobaculum calidifontis (strain DSM 21063 / JCM 11548 / VA1)).